The primary structure comprises 132 residues: Fatty acid-binding protein, adipocyte (132 aa).

The residue at position 2 (Cys2) is an N-acetylcysteine. At Ser13 the chain carries Phosphoserine. Position 20 is a phosphotyrosine; by Tyr-kinases (Tyr20). The Nuclear localization signal signature appears at 22-32; it reads KEVGVGFATRK. 127–129 contacts a fatty acid; sequence RVY.

Belongs to the calycin superfamily. Fatty-acid binding protein (FABP) family. As to quaternary structure, monomer. Homodimer. Interacts with PPARG.

It is found in the cytoplasm. The protein resides in the nucleus. Lipid transport protein in adipocytes. Binds both long chain fatty acids and retinoic acid. Delivers long-chain fatty acids and retinoic acid to their cognate receptors in the nucleus. FABPs are important elements related to the hibernating state in mammals. This chain is Fatty acid-binding protein, adipocyte (FABP4), found in Ictidomys tridecemlineatus (Thirteen-lined ground squirrel).